A 258-amino-acid chain; its full sequence is DNA repair protein RecO (258 aa).

This sequence belongs to the RecO family.

Its function is as follows. Involved in DNA repair and RecF pathway recombination. The sequence is that of DNA repair protein RecO from Syntrophotalea carbinolica (strain DSM 2380 / NBRC 103641 / GraBd1) (Pelobacter carbinolicus).